A 256-amino-acid chain; its full sequence is Triosephosphate isomerase (256 aa).

A substrate-binding site is contributed by 12–14 (NWK). Catalysis depends on H99, which acts as the Electrophile. E171 serves as the catalytic Proton acceptor. Residues G177, S217, and 238–239 (GG) contribute to the substrate site.

Belongs to the triosephosphate isomerase family. In terms of assembly, homodimer.

It localises to the cytoplasm. The enzyme catalyses D-glyceraldehyde 3-phosphate = dihydroxyacetone phosphate. Its pathway is carbohydrate biosynthesis; gluconeogenesis. It participates in carbohydrate degradation; glycolysis; D-glyceraldehyde 3-phosphate from glycerone phosphate: step 1/1. In terms of biological role, involved in the gluconeogenesis. Catalyzes stereospecifically the conversion of dihydroxyacetone phosphate (DHAP) to D-glyceraldehyde-3-phosphate (G3P). This Rubrobacter xylanophilus (strain DSM 9941 / JCM 11954 / NBRC 16129 / PRD-1) protein is Triosephosphate isomerase.